Consider the following 74-residue polypeptide: Protein krueppel (74 aa).

C2H2-type zinc fingers lie at residues 1–4 (ERTH), 10–32 (FECPECHKRFTRDHHLKTHMRLH), 38–60 (YHCSHCDRQFVQVANLRRHLRVH), and 66–74 (YACELCAAK).

This sequence belongs to the krueppel C2H2-type zinc-finger protein family.

Its subcellular location is the nucleus. Krueppel is a gap class segmentation protein. In Apis mellifera (Honeybee), this protein is Protein krueppel (Kr).